The sequence spans 330 residues: Basic leucine zipper 2 (330 aa).

Residues 1 to 207 (MAQLPPKIPT…NRQSAQRSRV (207 aa)) are disordered. A compositionally biased stretch (basic residues) spans 21–34 (GHHHHAAHGHHHQR). A compositionally biased stretch (pro residues) spans 45 to 56 (PLPPFPLPPPAP). 2 stretches are compositionally biased toward low complexity: residues 57–72 (ANGGAQQQQQQQQHQP) and 139–151 (QPAAPAASASSPS). Residues 155–166 (SMNDEKQDKGET) show a composition bias toward basic and acidic residues. The region spanning 188–244 (DPKRVKRILANRQSAQRSRVRKLQYISELERSVTSLQTEVSALSPRVAFLDHQRSLL) is the bZIP domain. Residues 190–209 (KRVKRILANRQSAQRSRVRK) form a basic motif region. Residues 216 to 244 (LERSVTSLQTEVSALSPRVAFLDHQRSLL) are leucine-zipper. Residues 267-330 (GGTEEGDREA…LVIGRDPDAL (64 aa)) form a disordered region.

Expressed in roots, shoots and panicles.

Its subcellular location is the nucleus. In terms of biological role, transcription regulator. This chain is Basic leucine zipper 2 (BZIP02), found in Oryza sativa subsp. japonica (Rice).